We begin with the raw amino-acid sequence, 449 residues long: Chromosomal replication initiator protein DnaA (449 aa).

The segment at 1-75 (MDTNNDIEKR…EILSQNKVGM (75 aa)) is domain I, interacts with DnaA modulators. Residues 75–106 (MHLAHSVDVRIEVASKVHVSDHSNINYKATKS) form a domain II region. The segment at 107-321 (SIKDSYTFEN…GAIIKISVNA (215 aa)) is domain III, AAA+ region. The ATP site is built by G151, G153, K154, and T155. Residues 322–449 (NLMNAPIDLN…LNELNDKKQH (128 aa)) form a domain IV, binds dsDNA region.

It belongs to the DnaA family. As to quaternary structure, oligomerizes as a right-handed, spiral filament on DNA at oriC.

It localises to the cytoplasm. Plays an essential role in the initiation and regulation of chromosomal replication. ATP-DnaA binds to the origin of replication (oriC) to initiate formation of the DNA replication initiation complex once per cell cycle. Binds the DnaA box (a 9 base pair repeat at the origin) and separates the double-stranded (ds)DNA. Forms a right-handed helical filament on oriC DNA; dsDNA binds to the exterior of the filament while single-stranded (ss)DNA is stabiized in the filament's interior. The ATP-DnaA-oriC complex binds and stabilizes one strand of the AT-rich DNA unwinding element (DUE), permitting loading of DNA polymerase. After initiation quickly degrades to an ADP-DnaA complex that is not apt for DNA replication. Binds acidic phospholipids. In Helicobacter acinonychis (strain Sheeba), this protein is Chromosomal replication initiator protein DnaA.